We begin with the raw amino-acid sequence, 304 residues long: Ribosomal protein L11 methyltransferase (304 aa).

Residues threonine 155, glycine 176, aspartate 198, and asparagine 239 each coordinate S-adenosyl-L-methionine.

This sequence belongs to the methyltransferase superfamily. PrmA family.

It localises to the cytoplasm. It catalyses the reaction L-lysyl-[protein] + 3 S-adenosyl-L-methionine = N(6),N(6),N(6)-trimethyl-L-lysyl-[protein] + 3 S-adenosyl-L-homocysteine + 3 H(+). Functionally, methylates ribosomal protein L11. The polypeptide is Ribosomal protein L11 methyltransferase (Caldicellulosiruptor bescii (strain ATCC BAA-1888 / DSM 6725 / KCTC 15123 / Z-1320) (Anaerocellum thermophilum)).